Reading from the N-terminus, the 421-residue chain is D-amino acid dehydrogenase (421 aa).

3–17 (VTILGAGVIGVTSAY) provides a ligand contact to FAD.

Belongs to the DadA oxidoreductase family. FAD serves as cofactor.

It carries out the reaction a D-alpha-amino acid + A + H2O = a 2-oxocarboxylate + AH2 + NH4(+). It participates in amino-acid degradation; D-alanine degradation; NH(3) and pyruvate from D-alanine: step 1/1. In terms of biological role, oxidative deamination of D-amino acids. The chain is D-amino acid dehydrogenase from Allorhizobium ampelinum (strain ATCC BAA-846 / DSM 112012 / S4) (Agrobacterium vitis (strain S4)).